Consider the following 427-residue polypeptide: Trigger factor (427 aa).

Positions 163–248 (GNIAIIDFKG…VKGIKVKELP (86 aa)) constitute a PPIase FKBP-type domain.

It belongs to the FKBP-type PPIase family. Tig subfamily.

The protein resides in the cytoplasm. It catalyses the reaction [protein]-peptidylproline (omega=180) = [protein]-peptidylproline (omega=0). In terms of biological role, involved in protein export. Acts as a chaperone by maintaining the newly synthesized protein in an open conformation. Functions as a peptidyl-prolyl cis-trans isomerase. In Clostridium botulinum (strain Alaska E43 / Type E3), this protein is Trigger factor.